Reading from the N-terminus, the 267-residue chain is 4-hydroxy-tetrahydrodipicolinate reductase (267 aa).

Residues 8 to 13 (GAGGRM) and Glu34 each bind NAD(+). Arg35 is an NADP(+) binding site. NAD(+) contacts are provided by residues 98-100 (GTT) and 122-125 (APNM). His155 serves as the catalytic Proton donor/acceptor. His156 lines the (S)-2,3,4,5-tetrahydrodipicolinate pocket. The Proton donor role is filled by Lys159. (S)-2,3,4,5-tetrahydrodipicolinate is bound at residue 165–166 (GT).

It belongs to the DapB family.

The protein resides in the cytoplasm. The catalysed reaction is (S)-2,3,4,5-tetrahydrodipicolinate + NAD(+) + H2O = (2S,4S)-4-hydroxy-2,3,4,5-tetrahydrodipicolinate + NADH + H(+). The enzyme catalyses (S)-2,3,4,5-tetrahydrodipicolinate + NADP(+) + H2O = (2S,4S)-4-hydroxy-2,3,4,5-tetrahydrodipicolinate + NADPH + H(+). Its pathway is amino-acid biosynthesis; L-lysine biosynthesis via DAP pathway; (S)-tetrahydrodipicolinate from L-aspartate: step 4/4. Catalyzes the conversion of 4-hydroxy-tetrahydrodipicolinate (HTPA) to tetrahydrodipicolinate. This is 4-hydroxy-tetrahydrodipicolinate reductase from Thioalkalivibrio sulfidiphilus (strain HL-EbGR7).